A 230-amino-acid polypeptide reads, in one-letter code: Small ribosomal subunit protein uS3 (230 aa).

The 69-residue stretch at 39 to 107 (VRNYLFKKLI…PVHINIEEIK (69 aa)) folds into the KH type-2 domain.

It belongs to the universal ribosomal protein uS3 family. As to quaternary structure, part of the 30S ribosomal subunit. Forms a tight complex with proteins S10 and S14.

Its function is as follows. Binds the lower part of the 30S subunit head. Binds mRNA in the 70S ribosome, positioning it for translation. This chain is Small ribosomal subunit protein uS3, found in Vesicomyosocius okutanii subsp. Calyptogena okutanii (strain HA).